The primary structure comprises 935 residues: Lon protease homolog 2, peroxisomal (935 aa).

The 285-residue stretch at 12–296 (LPVHRLERNL…NLRRLVEEMG (285 aa)) folds into the Lon N-terminal domain. Residue 452–459 (GPPGVGKT) participates in ATP binding. In terms of domain architecture, Lon proteolytic spans 692-922 (QKGYGVVNGL…SDVLASVWEG (231 aa)). Residues serine 789 and lysine 832 contribute to the active site. The short motif at 933-935 (ARI) is the Microbody targeting signal element.

Belongs to the peptidase S16 family.

The protein localises to the peroxisome matrix. The catalysed reaction is Hydrolysis of proteins in presence of ATP.. ATP-dependent serine protease that mediates the selective degradation of misfolded and unassembled polypeptides in the peroxisomal matrix. Necessary for type 2 peroxisome targeting signal (PTS2)-containing protein processing and facilitates peroxisome matrix protein import. The polypeptide is Lon protease homolog 2, peroxisomal (PLN) (Pichia angusta (Yeast)).